The chain runs to 191 residues: dCTP deaminase, dUMP-forming (191 aa).

DCTP contacts are provided by residues 101 to 106, Asp-119, 127 to 129, Gln-148, Tyr-162, and Gln-174; these read KSSLGR and TLE. Glu-129 acts as the Proton donor/acceptor in catalysis.

Belongs to the dCTP deaminase family. As to quaternary structure, homotrimer.

The catalysed reaction is dCTP + 2 H2O = dUMP + NH4(+) + diphosphate. It participates in pyrimidine metabolism; dUMP biosynthesis; dUMP from dCTP: step 1/1. Functionally, bifunctional enzyme that catalyzes both the deamination of dCTP to dUTP and the hydrolysis of dUTP to dUMP without releasing the toxic dUTP intermediate. In Streptomyces avermitilis (strain ATCC 31267 / DSM 46492 / JCM 5070 / NBRC 14893 / NCIMB 12804 / NRRL 8165 / MA-4680), this protein is dCTP deaminase, dUMP-forming.